Consider the following 474-residue polypeptide: AAA-ATPase At3g28610 (474 aa).

The first 25 residues, 1–25 (MMGNMFGSSLASLFFLWATIQQIFP), serve as a signal peptide directing secretion. 244–251 (GPPGTGKS) is an ATP binding site.

Belongs to the AAA ATPase family. BCS1 subfamily. The cofactor is Mg(2+).

The catalysed reaction is ATP + H2O = ADP + phosphate + H(+). This Arabidopsis thaliana (Mouse-ear cress) protein is AAA-ATPase At3g28610.